A 301-amino-acid polypeptide reads, in one-letter code: 33 kDa chaperonin (301 aa).

Cystine bridges form between Cys-244-Cys-246 and Cys-277-Cys-280.

It belongs to the HSP33 family. Under oxidizing conditions two disulfide bonds are formed involving the reactive cysteines. Under reducing conditions zinc is bound to the reactive cysteines and the protein is inactive.

The protein localises to the cytoplasm. Its function is as follows. Redox regulated molecular chaperone. Protects both thermally unfolding and oxidatively damaged proteins from irreversible aggregation. Plays an important role in the bacterial defense system toward oxidative stress. The chain is 33 kDa chaperonin from Geobacter sulfurreducens (strain ATCC 51573 / DSM 12127 / PCA).